We begin with the raw amino-acid sequence, 418 residues long: Putative competence-damage inducible protein (418 aa).

Belongs to the CinA family.

The sequence is that of Putative competence-damage inducible protein from Streptococcus pneumoniae (strain 70585).